We begin with the raw amino-acid sequence, 364 residues long: Ribosomal RNA large subunit methyltransferase F (364 aa).

The disordered stretch occupies residues 1-28; the sequence is MTNKRKSAKPLEPAKRTPKLRTKKSRDL.

This sequence belongs to the methyltransferase superfamily. METTL16/RlmF family.

It is found in the cytoplasm. It carries out the reaction adenosine(1618) in 23S rRNA + S-adenosyl-L-methionine = N(6)-methyladenosine(1618) in 23S rRNA + S-adenosyl-L-homocysteine + H(+). In terms of biological role, specifically methylates the adenine in position 1618 of 23S rRNA. The chain is Ribosomal RNA large subunit methyltransferase F from Vibrio vulnificus (strain YJ016).